We begin with the raw amino-acid sequence, 370 residues long: Histidinol-phosphate aminotransferase 1 (370 aa).

Lys222 is subject to N6-(pyridoxal phosphate)lysine.

This sequence belongs to the class-II pyridoxal-phosphate-dependent aminotransferase family. Histidinol-phosphate aminotransferase subfamily. In terms of assembly, homodimer. Pyridoxal 5'-phosphate serves as cofactor.

The enzyme catalyses L-histidinol phosphate + 2-oxoglutarate = 3-(imidazol-4-yl)-2-oxopropyl phosphate + L-glutamate. The protein operates within amino-acid biosynthesis; L-histidine biosynthesis; L-histidine from 5-phospho-alpha-D-ribose 1-diphosphate: step 7/9. In Bacillus anthracis, this protein is Histidinol-phosphate aminotransferase 1 (hisC1).